Consider the following 875-residue polypeptide: Leucine--tRNA ligase (875 aa).

A 'HIGH' region motif is present at residues 43 to 53 (PYPSGRIHMGH). A 'KMSKS' region motif is present at residues 633–637 (KMSKS). Lysine 636 is a binding site for ATP.

Belongs to the class-I aminoacyl-tRNA synthetase family.

It localises to the cytoplasm. It carries out the reaction tRNA(Leu) + L-leucine + ATP = L-leucyl-tRNA(Leu) + AMP + diphosphate. The protein is Leucine--tRNA ligase of Bartonella bacilliformis (strain ATCC 35685 / KC583 / Herrer 020/F12,63).